The following is a 479-amino-acid chain: Muscarinic acetylcholine receptor M4 (479 aa).

Topologically, residues 1–30 (MANFTPVNGSSANQSVRLVTTAHNHLETVE) are extracellular. Residues Asn8 and Asn13 are each glycosylated (N-linked (GlcNAc...) asparagine). The helical transmembrane segment at 31 to 53 (MVFIATVTGSLSLVTVVGNILVM) threads the bilayer. Residues 54 to 67 (LSIKVNRQLQTVNN) lie on the Cytoplasmic side of the membrane. Residues 68-88 (YFLFSLACADLIIGAFSMNLY) form a helical membrane-spanning segment. Topologically, residues 89–105 (TLYIIKGYWPLGAVVCD) are extracellular. Residues Cys104 and Cys184 are joined by a disulfide bond. The chain crosses the membrane as a helical span at residues 106 to 127 (LWLALDYVVSNASVMNLLIISF). Over 128 to 147 (DRYFCVTKPLTYPARRTTKM) the chain is Cytoplasmic. Residues 148-170 (AGLMIAAAWVLSFVLWAPAILFW) traverse the membrane as a helical segment. At 171–192 (QFVVGKRTVPDNQCFIQFLSNP) the chain is on the extracellular side. A helical membrane pass occupies residues 193–215 (AVTFGTAIAAFYLPVVIMTVLYI). Topologically, residues 216–401 (HISLASRSRV…AARERKVTRT (186 aa)) are cytoplasmic. Positions 271–334 (LEEAPPPALP…APTLQPRTLN (64 aa)) are disordered. The segment covering 274–285 (APPPALPPPPRP) has biased composition (pro residues). The span at 293–303 (NESSSGSATQN) shows a compositional bias: polar residues. Low complexity predominate over residues 310–333 (TELSTTEAATTPALPAPTLQPRTL). The helical transmembrane segment at 402–422 (IFAILLAFILTWTPYNVMVLV) threads the bilayer. Residues 423–436 (NTFCQSCIPERVWS) lie on the Extracellular side of the membrane. The chain crosses the membrane as a helical span at residues 437-456 (IGYWLCYVNSTINPACYALC). The Cytoplasmic portion of the chain corresponds to 457-479 (NATFKKTFRHLLLCQYRNIGTAR). Residues Thr459, Thr463, and Thr477 each carry the phosphothreonine modification.

The protein belongs to the G-protein coupled receptor 1 family. Muscarinic acetylcholine receptor subfamily. CHRM4 sub-subfamily.

The protein resides in the cell membrane. Its subcellular location is the postsynaptic cell membrane. Its function is as follows. The muscarinic acetylcholine receptor mediates various cellular responses, including inhibition of adenylate cyclase, breakdown of phosphoinositides and modulation of potassium channels through the action of G proteins. Primary transducing effect is inhibition of adenylate cyclase. The chain is Muscarinic acetylcholine receptor M4 (Chrm4) from Mus musculus (Mouse).